We begin with the raw amino-acid sequence, 90 residues long: uncharacterized protein (90 aa).

This is an uncharacterized protein from Archaeoglobus fulgidus (strain ATCC 49558 / DSM 4304 / JCM 9628 / NBRC 100126 / VC-16).